Here is a 231-residue protein sequence, read N- to C-terminus: DNA mismatch repair protein MutH (231 aa).

It belongs to the MutH family.

The protein localises to the cytoplasm. Functionally, sequence-specific endonuclease that cleaves unmethylated GATC sequences. It is involved in DNA mismatch repair. The polypeptide is DNA mismatch repair protein MutH (Shewanella woodyi (strain ATCC 51908 / MS32)).